Here is a 336-residue protein sequence, read N- to C-terminus: Phospho-N-acetylmuramoyl-pentapeptide-transferase (336 aa).

10 helical membrane passes run 3-23, 53-73, 78-98, 118-138, 143-163, 174-194, 200-220, 226-246, 251-271, and 316-336; these read LTLI…PYFI, GGTV…LFSI, SLAL…IGFL, LALQ…PSGI, VFGY…FWVV, GIDG…GVIA, FDVL…FCFN, VFMG…ISIA, WTLL…MLQV, and AFLW…LYVF.

Belongs to the glycosyltransferase 4 family. MraY subfamily. It depends on Mg(2+) as a cofactor.

It is found in the cell membrane. It carries out the reaction UDP-N-acetyl-alpha-D-muramoyl-L-alanyl-gamma-D-glutamyl-L-lysyl-D-alanyl-D-alanine + di-trans,octa-cis-undecaprenyl phosphate = Mur2Ac(oyl-L-Ala-gamma-D-Glu-L-Lys-D-Ala-D-Ala)-di-trans,octa-cis-undecaprenyl diphosphate + UMP. Its pathway is cell wall biogenesis; peptidoglycan biosynthesis. Its function is as follows. Catalyzes the initial step of the lipid cycle reactions in the biosynthesis of the cell wall peptidoglycan: transfers peptidoglycan precursor phospho-MurNAc-pentapeptide from UDP-MurNAc-pentapeptide onto the lipid carrier undecaprenyl phosphate, yielding undecaprenyl-pyrophosphoryl-MurNAc-pentapeptide, known as lipid I. The polypeptide is Phospho-N-acetylmuramoyl-pentapeptide-transferase (Streptococcus pyogenes serotype M5 (strain Manfredo)).